Here is a 509-residue protein sequence, read N- to C-terminus: GMP synthase [glutamine-hydrolyzing] (509 aa).

The region spanning 4 to 193 is the Glutamine amidotransferase type-1 domain; that stretch reads NVLILDFGSQ…LIKIAGTKAT (190 aa). Catalysis depends on C79, which acts as the Nucleophile. Catalysis depends on residues H167 and E169. In terms of domain architecture, GMPS ATP-PPase spans 194-384; sequence WTPGKFVDLT…LGIDKELLGR (191 aa). 221-227 contributes to the ATP binding site; that stretch reads SGGVDST.

In terms of assembly, homodimer.

It catalyses the reaction XMP + L-glutamine + ATP + H2O = GMP + L-glutamate + AMP + diphosphate + 2 H(+). It functions in the pathway purine metabolism; GMP biosynthesis; GMP from XMP (L-Gln route): step 1/1. Functionally, catalyzes the synthesis of GMP from XMP. This is GMP synthase [glutamine-hydrolyzing] from Christiangramia forsetii (strain DSM 17595 / CGMCC 1.15422 / KT0803) (Gramella forsetii).